The following is a 194-amino-acid chain: Mu-like prophage FluMu protein gp37 (194 aa).

The protein to phage Mu protein gp37.

This Haemophilus influenzae (strain ATCC 51907 / DSM 11121 / KW20 / Rd) protein is Mu-like prophage FluMu protein gp37.